Consider the following 223-residue polypeptide: Deoxyribose-phosphate aldolase (223 aa).

Catalysis depends on Asp-89, which acts as the Proton donor/acceptor. Catalysis depends on Lys-152, which acts as the Schiff-base intermediate with acetaldehyde. Residue Lys-181 is the Proton donor/acceptor of the active site.

The protein belongs to the DeoC/FbaB aldolase family. DeoC type 1 subfamily.

The protein localises to the cytoplasm. It carries out the reaction 2-deoxy-D-ribose 5-phosphate = D-glyceraldehyde 3-phosphate + acetaldehyde. The protein operates within carbohydrate degradation; 2-deoxy-D-ribose 1-phosphate degradation; D-glyceraldehyde 3-phosphate and acetaldehyde from 2-deoxy-alpha-D-ribose 1-phosphate: step 2/2. Its function is as follows. Catalyzes a reversible aldol reaction between acetaldehyde and D-glyceraldehyde 3-phosphate to generate 2-deoxy-D-ribose 5-phosphate. This chain is Deoxyribose-phosphate aldolase, found in Bacillus cereus (strain Q1).